Reading from the N-terminus, the 242-residue chain is Probable transcriptional regulatory protein Dred_1658 (242 aa).

This sequence belongs to the TACO1 family.

It localises to the cytoplasm. The polypeptide is Probable transcriptional regulatory protein Dred_1658 (Desulforamulus reducens (strain ATCC BAA-1160 / DSM 100696 / MI-1) (Desulfotomaculum reducens)).